The primary structure comprises 338 residues: Putative ankyrin repeat protein CBU_0781 (338 aa).

Residues 1 to 31 (MSRRETPTSTISSTPTGTRTPRRRLSRKGHP) are disordered. The segment covering 7-19 (PTSTISSTPTGTR) has biased composition (low complexity). The span at 20-31 (TPRRRLSRKGHP) shows a compositional bias: basic residues. 2 ANK repeats span residues 92-124 (QGDT…IVNK) and 125-157 (LGET…IKYK). Residues 197–242 (SQIMASDKEIDEIIRNARNLQIIKKEKREAEERARTKKSKQITLQR) are a coiled coil. The disordered stretch occupies residues 319–338 (KKEDTTLSRNNSLSCLSSPR). A compositionally biased stretch (low complexity) spans 325 to 338 (LSRNNSLSCLSSPR).

This chain is Putative ankyrin repeat protein CBU_0781, found in Coxiella burnetii (strain RSA 493 / Nine Mile phase I).